Consider the following 63-residue polypeptide: Overexpressed in colon carcinoma 1 protein homolog (63 aa).

Residues 1 to 10 (MGCGNSTATS) are compositionally biased toward polar residues. Positions 1–39 (MGCGNSTATSAAAGRGPTGAVKDTTEDSITEDDKRRNYG) are disordered.

This sequence belongs to the OCC1 family.

This chain is Overexpressed in colon carcinoma 1 protein homolog, found in Mus musculus (Mouse).